Consider the following 393-residue polypeptide: 4-hydroxyphenylpyruvate dioxygenase (393 aa).

T2 is subject to N-acetylthreonine. VOC domains are found at residues 18–149 (HFHS…LVEK) and 180–338 (IIDH…IFTK). Position 132 is an N6-succinyllysine (K132). H183 contacts Fe cation. A phosphoserine mark is found at S211, S226, and S250. Fe cation is bound by residues H266 and E349.

It belongs to the 4HPPD family. Homodimer. The cofactor is Fe cation.

Its subcellular location is the cytoplasm. The protein resides in the endoplasmic reticulum membrane. The protein localises to the golgi apparatus membrane. The catalysed reaction is 3-(4-hydroxyphenyl)pyruvate + O2 = homogentisate + CO2. The protein operates within amino-acid degradation; L-phenylalanine degradation; acetoacetate and fumarate from L-phenylalanine: step 3/6. Functionally, catalyzes the conversion of 4-hydroxyphenylpyruvic acid to homogentisic acid, one of the steps in tyrosine catabolism. In Bos taurus (Bovine), this protein is 4-hydroxyphenylpyruvate dioxygenase (HPD).